Here is a 284-residue protein sequence, read N- to C-terminus: Interferon antagonist OPG040 (284 aa).

6 ANK repeats span residues 29–58 (HGHSALYYAIADNNVRLVCTLLNAGALKNL), 60–89 (ENEFPLHQAATLEDTKIVKILLFSGLDDSQ), 93–122 (KGNTALYYAVDSGNMQTVKLFVKKNWRLMF), 127–157 (GWKTSFYHAVMLNDVSIVSYFLSEIPSTFDL), 159–188 (ILLSCIHITIKNGHVDMMILLLDYMTSTNT), and 193–222 (LFIPDIKLAIDNKDIEMLQALFKYDINIYS).

The protein belongs to the orthopoxvirus OPG039 family.

The protein resides in the host cytoplasm. Its subcellular location is the host nucleus. Its function is as follows. Inhibits antiviral activity induced by type I interferons. Does not block signal transduction of IFN, but is important to counter the host antiviral state induced by a pre-treatment with IFN. Plays a role in the inhibition of host NF-kappa-B activation by preventing the acetylation of the RELA/p65 subunit of NF-kappaB. In Bos taurus (Bovine), this protein is Interferon antagonist OPG040 (OPG039).